The sequence spans 435 residues: Nematode resistance protein-like HSPRO2 (435 aa).

Interacts with SNF4.

The protein resides in the cytoplasm. Its function is as follows. Positive regulator of basal resistance. This is Nematode resistance protein-like HSPRO2 (HSPRO2) from Arabidopsis thaliana (Mouse-ear cress).